Consider the following 327-residue polypeptide: Malate dehydrogenase (327 aa).

12 to 18 is a binding site for NAD(+); the sequence is GAAGQIG. Substrate is bound by residues Arg-93 and Arg-99. NAD(+) contacts are provided by residues Asn-106, Gln-113, and 130–132; that span reads VGN. The substrate site is built by Asn-132 and Arg-163. The active-site Proton acceptor is His-188.

It belongs to the LDH/MDH superfamily. MDH type 2 family.

The enzyme catalyses (S)-malate + NAD(+) = oxaloacetate + NADH + H(+). In terms of biological role, catalyzes the reversible oxidation of malate to oxaloacetate. In Cupriavidus metallidurans (strain ATCC 43123 / DSM 2839 / NBRC 102507 / CH34) (Ralstonia metallidurans), this protein is Malate dehydrogenase.